Consider the following 196-residue polypeptide: DnaA initiator-associating protein DiaA (196 aa).

In terms of domain architecture, SIS spans 34-196 (LVQSLLNGNK…DSTLFPHQDE (163 aa)).

Belongs to the SIS family. DiaA subfamily. As to quaternary structure, homotetramer; dimer of dimers.

Functionally, required for the timely initiation of chromosomal replication via direct interactions with the DnaA initiator protein. The sequence is that of DnaA initiator-associating protein DiaA from Serratia proteamaculans (strain 568).